Here is a 426-residue protein sequence, read N- to C-terminus: Phosphoribosylamine--glycine ligase (426 aa).

The ATP-grasp domain maps to 113–320 (KSLMTEAKIP…LLELLYRAST (208 aa)). 139–200 (LESKSIPIVI…EEFMEGQEAS (62 aa)) is an ATP binding site. Residues Glu290 and Asn292 each coordinate Mg(2+).

The protein belongs to the GARS family. Requires Mg(2+) as cofactor. Mn(2+) is required as a cofactor.

The enzyme catalyses 5-phospho-beta-D-ribosylamine + glycine + ATP = N(1)-(5-phospho-beta-D-ribosyl)glycinamide + ADP + phosphate + H(+). It functions in the pathway purine metabolism; IMP biosynthesis via de novo pathway; N(1)-(5-phospho-D-ribosyl)glycinamide from 5-phospho-alpha-D-ribose 1-diphosphate: step 2/2. This chain is Phosphoribosylamine--glycine ligase, found in Leptospira interrogans serogroup Icterohaemorrhagiae serovar copenhageni (strain Fiocruz L1-130).